Consider the following 111-residue polypeptide: Large ribosomal subunit protein uL23 (111 aa).

The protein belongs to the universal ribosomal protein uL23 family. In terms of assembly, part of the 50S ribosomal subunit. Contacts protein L29, and trigger factor when it is bound to the ribosome.

In terms of biological role, one of the early assembly proteins it binds 23S rRNA. One of the proteins that surrounds the polypeptide exit tunnel on the outside of the ribosome. Forms the main docking site for trigger factor binding to the ribosome. This is Large ribosomal subunit protein uL23 from Nitrosomonas europaea (strain ATCC 19718 / CIP 103999 / KCTC 2705 / NBRC 14298).